The chain runs to 115 residues: Large ribosomal subunit protein bL20c (115 aa).

This sequence belongs to the bacterial ribosomal protein bL20 family.

It is found in the plastid. It localises to the chloroplast. Its function is as follows. Binds directly to 23S ribosomal RNA and is necessary for the in vitro assembly process of the 50S ribosomal subunit. It is not involved in the protein synthesizing functions of that subunit. This is Large ribosomal subunit protein bL20c (rpl20) from Chlorella vulgaris (Green alga).